The sequence spans 308 residues: Cyclopropane mycolic acid synthase 2 (308 aa).

Residues 44–45 (YS), 79–87 (LLDIGCGWG), 105–110 (TLSANQ), and 137–138 (WE) contribute to the S-adenosyl-L-methionine site. C290 is an active-site residue.

The protein belongs to the CFA/CMAS family. As to quaternary structure, homodimer.

The protein localises to the cytoplasm. The enzyme catalyses a 1-acyl-2-(9Z)-enoyl-sn-glycero-3-phospholipid + S-adenosyl-L-methionine = a 1-acyl-2-(9-cyclopronane)-acyl-sn-glycero-3-phospholipid + S-adenosyl-L-homocysteine + H(+). The protein operates within lipid metabolism; mycolic acid biosynthesis. Its function is as follows. Catalyzes the formation of trans cyclopropanated ketomycolate or methoxymycolate through the conversion of a double bond to a cyclopropane ring at the proximal position of an oxygenated mycolic acid via the transfer of a methylene group from S-adenosyl-L-methionine. In the absence of MmaA2, CmaA2 has a non-specific cis-cyclopropanating activity and is able to catalyze the conversion of a double bond to a cis cyclopropane ring at the distal position of an alpha mycolic acid. Cyclopropanated mycolic acids are key factors participating in cell envelope permeability, host immunomodulation and persistence. This Mycobacterium leprae (strain TN) protein is Cyclopropane mycolic acid synthase 2 (cmaA2).